Consider the following 226-residue polypeptide: Phosphoribosylformylglycinamidine synthase subunit PurQ (226 aa).

Residues 2 to 226 form the Glutamine amidotransferase type-1 domain; sequence KIAVIVFPGS…LENGTVIAEG (225 aa). Cysteine 86 acts as the Nucleophile in catalysis. Active-site residues include histidine 195 and glutamate 197.

As to quaternary structure, part of the FGAM synthase complex composed of 1 PurL, 1 PurQ and 2 PurS subunits.

Its subcellular location is the cytoplasm. It carries out the reaction N(2)-formyl-N(1)-(5-phospho-beta-D-ribosyl)glycinamide + L-glutamine + ATP + H2O = 2-formamido-N(1)-(5-O-phospho-beta-D-ribosyl)acetamidine + L-glutamate + ADP + phosphate + H(+). The enzyme catalyses L-glutamine + H2O = L-glutamate + NH4(+). Its pathway is purine metabolism; IMP biosynthesis via de novo pathway; 5-amino-1-(5-phospho-D-ribosyl)imidazole from N(2)-formyl-N(1)-(5-phospho-D-ribosyl)glycinamide: step 1/2. In terms of biological role, part of the phosphoribosylformylglycinamidine synthase complex involved in the purines biosynthetic pathway. Catalyzes the ATP-dependent conversion of formylglycinamide ribonucleotide (FGAR) and glutamine to yield formylglycinamidine ribonucleotide (FGAM) and glutamate. The FGAM synthase complex is composed of three subunits. PurQ produces an ammonia molecule by converting glutamine to glutamate. PurL transfers the ammonia molecule to FGAR to form FGAM in an ATP-dependent manner. PurS interacts with PurQ and PurL and is thought to assist in the transfer of the ammonia molecule from PurQ to PurL. This Limosilactobacillus fermentum (strain NBRC 3956 / LMG 18251) (Lactobacillus fermentum) protein is Phosphoribosylformylglycinamidine synthase subunit PurQ.